The chain runs to 189 residues: Adenylate kinase homolog MTH_1663 (189 aa).

Residue 12–20 (GVPGTGKTT) participates in ATP binding.

This sequence belongs to the archaeal adenylate kinase family.

The protein is Adenylate kinase homolog MTH_1663 of Methanothermobacter thermautotrophicus (strain ATCC 29096 / DSM 1053 / JCM 10044 / NBRC 100330 / Delta H) (Methanobacterium thermoautotrophicum).